The following is an 84-amino-acid chain: uncharacterized protein (84 aa).

The protein to M.jannaschii MJ1121.

This is an uncharacterized protein from Archaeoglobus fulgidus (strain ATCC 49558 / DSM 4304 / JCM 9628 / NBRC 100126 / VC-16).